A 140-amino-acid chain; its full sequence is Translation initiation factor 2 subunit beta (140 aa).

Belongs to the eIF-2-beta/eIF-5 family. Heterotrimer composed of an alpha, a beta and a gamma chain.

Its function is as follows. eIF-2 functions in the early steps of protein synthesis by forming a ternary complex with GTP and initiator tRNA. The chain is Translation initiation factor 2 subunit beta (eif2b) from Pyrococcus abyssi (strain GE5 / Orsay).